The following is a 135-amino-acid chain: uncharacterized protein (135 aa).

A Response regulatory domain is found at 13–129 (QVLIAENSRF…KILEKVNAAI (117 aa)). At Asp64 the chain carries 4-aspartylphosphate.

This is an uncharacterized protein from Leptospira interrogans serogroup Icterohaemorrhagiae serovar copenhageni (strain Fiocruz L1-130).